Here is a 1046-residue protein sequence, read N- to C-terminus: Translation initiation factor IF-2 (1046 aa).

The segment at 49 to 450 (ALQQGNGGKA…GVMLPRGNGQ (402 aa)) is disordered. Composition is skewed to low complexity over residues 57–80 (KAAP…ARPA) and 89–106 (PAAA…AAPA). The span at 107–128 (APGPRPGPKPAPRPAPAAPAPA) shows a compositional bias: pro residues. The span at 129–169 (APEFTAPPSAPAAPAAAASGPRPGARPGAPKPGGARPATPG) shows a compositional bias: low complexity. Residues 177-194 (RGERTDRGDRGDRGDRQG) are compositionally biased toward basic and acidic residues. Positions 195–214 (AARPGGQAPRPGARPAGPRP) are enriched in low complexity. Gly residues-rich tracts occupy residues 239 to 248 (PRPGGAGAPG) and 266 to 280 (GGPG…GPGG). Residues 302-318 (GNRPNPGMMPQRPAAGP) are compositionally biased toward low complexity. Residues 319–414 (RPGGGGPGGR…GTQGAFGRPG (96 aa)) are compositionally biased toward gly residues. A compositionally biased stretch (basic residues) spans 418 to 427 (RRGRKSKRQR). Residues 539 to 711 (ARPPVVTVMG…VVLTADASLD (173 aa)) enclose the tr-type G domain. Residues 548–555 (GHVDHGKT) form a G1 region. 548–555 (GHVDHGKT) contributes to the GTP binding site. A G2 region spans residues 573-577 (GITQH). The interval 598 to 601 (DTPG) is G3. GTP is bound by residues 598–602 (DTPGH) and 652–655 (NKID). Residues 652–655 (NKID) form a G4 region. The interval 688–690 (SAK) is G5.

The protein belongs to the TRAFAC class translation factor GTPase superfamily. Classic translation factor GTPase family. IF-2 subfamily.

It localises to the cytoplasm. Functionally, one of the essential components for the initiation of protein synthesis. Protects formylmethionyl-tRNA from spontaneous hydrolysis and promotes its binding to the 30S ribosomal subunits. Also involved in the hydrolysis of GTP during the formation of the 70S ribosomal complex. The chain is Translation initiation factor IF-2 from Streptomyces avermitilis (strain ATCC 31267 / DSM 46492 / JCM 5070 / NBRC 14893 / NCIMB 12804 / NRRL 8165 / MA-4680).